A 264-amino-acid chain; its full sequence is Thymidylate synthase (264 aa).

Arginine 21 provides a ligand contact to dUMP. (6R)-5,10-methylene-5,6,7,8-tetrahydrofolate is bound at residue histidine 51. Residue 126 to 127 (RR) participates in dUMP binding. The Nucleophile role is filled by cysteine 146. DUMP is bound by residues 166-169 (RSAD), asparagine 177, and 207-209 (HLY). Aspartate 169 lines the (6R)-5,10-methylene-5,6,7,8-tetrahydrofolate pocket. Alanine 263 provides a ligand contact to (6R)-5,10-methylene-5,6,7,8-tetrahydrofolate.

It belongs to the thymidylate synthase family. Bacterial-type ThyA subfamily. Homodimer.

The protein resides in the cytoplasm. It catalyses the reaction dUMP + (6R)-5,10-methylene-5,6,7,8-tetrahydrofolate = 7,8-dihydrofolate + dTMP. It participates in pyrimidine metabolism; dTTP biosynthesis. Its function is as follows. Catalyzes the reductive methylation of 2'-deoxyuridine-5'-monophosphate (dUMP) to 2'-deoxythymidine-5'-monophosphate (dTMP) while utilizing 5,10-methylenetetrahydrofolate (mTHF) as the methyl donor and reductant in the reaction, yielding dihydrofolate (DHF) as a by-product. This enzymatic reaction provides an intracellular de novo source of dTMP, an essential precursor for DNA biosynthesis. The chain is Thymidylate synthase from Aromatoleum aromaticum (strain DSM 19018 / LMG 30748 / EbN1) (Azoarcus sp. (strain EbN1)).